Here is a 484-residue protein sequence, read N- to C-terminus: ATP-dependent RNA helicase DDX25 (484 aa).

Residue Thr-49 is modified to Phosphothreonine. Positions 62 to 75 (LAANSLLNKLIRQS) match the Nuclear export signal motif. Positions 98 to 126 (KTFEELRLKEELLKGIYAMGFNRPSKIQE) match the Q motif motif. The Nuclear localization signal motif lies at 101 to 115 (EELRLKEELLKGIYA). The region spanning 131 to 301 (MMLAHPPQNL…ERIIPDPNVI (171 aa)) is the Helicase ATP-binding domain. 144-151 (SQSGTGKT) provides a ligand contact to ATP. Positions 248-251 (DEAD) match the DEAD box motif. Positions 312–479 (NIRQYYVLCE…QLDPEDMDEI (168 aa)) constitute a Helicase C-terminal domain.

It belongs to the DEAD box helicase family. In terms of processing, phosphorylated on threonine residues. The phosphorylated form is found in the cytoplasm but not in the nucleus. Isoform 1 is expressed in germ cells. Isoform 2 is expressed in Leydig cells and in round spermatids of adult testis upon gonadotropin stimulation.

The protein localises to the cytoplasm. It localises to the nucleus. It carries out the reaction ATP + H2O = ADP + phosphate + H(+). In terms of biological role, ATP-dependent RNA helicase. Required for mRNA export and translation regulation during spermatid development. The polypeptide is ATP-dependent RNA helicase DDX25 (Ddx25) (Mus musculus (Mouse)).